A 517-amino-acid chain; its full sequence is GTPase Obg (517 aa).

Residues 2–159 (ATFVDTVTLH…GDVVLELKVV (158 aa)) enclose the Obg domain. The OBG-type G domain maps to 160–336 (ADVALVGYPS…LSFALAELVK (177 aa)). GTP contacts are provided by residues 166 to 173 (GYPSAGKS), 191 to 195 (FTTLH), 212 to 215 (DVPG), 288 to 291 (NKID), and 317 to 319 (STV). Residues Ser-173 and Thr-193 each coordinate Mg(2+). The OCT domain maps to 355 to 439 (PRAVDEKPFT…GDGVVFDWEP (85 aa)). The disordered stretch occupies residues 490–517 (EGEAGLWADEDGTGQDGTDEDATTDAKA). The segment covering 497–517 (ADEDGTGQDGTDEDATTDAKA) has biased composition (acidic residues).

The protein belongs to the TRAFAC class OBG-HflX-like GTPase superfamily. OBG GTPase family. As to quaternary structure, monomer. The cofactor is Mg(2+).

It localises to the cytoplasm. Its function is as follows. An essential GTPase which binds GTP, GDP and possibly (p)ppGpp with moderate affinity, with high nucleotide exchange rates and a fairly low GTP hydrolysis rate. Plays a role in control of the cell cycle, stress response, ribosome biogenesis and in those bacteria that undergo differentiation, in morphogenesis control. This chain is GTPase Obg, found in Clavibacter sepedonicus (Clavibacter michiganensis subsp. sepedonicus).